The following is a 367-amino-acid chain: UDP-N-acetylglucosamine--N-acetylmuramyl-(pentapeptide) pyrophosphoryl-undecaprenol N-acetylglucosamine transferase (367 aa).

Residues 15 to 17 (TGG), Asn127, Arg163, Ser191, Ile249, and Gln294 contribute to the UDP-N-acetyl-alpha-D-glucosamine site.

It belongs to the glycosyltransferase 28 family. MurG subfamily.

It is found in the cell inner membrane. It catalyses the reaction di-trans,octa-cis-undecaprenyl diphospho-N-acetyl-alpha-D-muramoyl-L-alanyl-D-glutamyl-meso-2,6-diaminopimeloyl-D-alanyl-D-alanine + UDP-N-acetyl-alpha-D-glucosamine = di-trans,octa-cis-undecaprenyl diphospho-[N-acetyl-alpha-D-glucosaminyl-(1-&gt;4)]-N-acetyl-alpha-D-muramoyl-L-alanyl-D-glutamyl-meso-2,6-diaminopimeloyl-D-alanyl-D-alanine + UDP + H(+). Its pathway is cell wall biogenesis; peptidoglycan biosynthesis. Cell wall formation. Catalyzes the transfer of a GlcNAc subunit on undecaprenyl-pyrophosphoryl-MurNAc-pentapeptide (lipid intermediate I) to form undecaprenyl-pyrophosphoryl-MurNAc-(pentapeptide)GlcNAc (lipid intermediate II). The polypeptide is UDP-N-acetylglucosamine--N-acetylmuramyl-(pentapeptide) pyrophosphoryl-undecaprenol N-acetylglucosamine transferase (Burkholderia pseudomallei (strain 668)).